The sequence spans 255 residues: SLA class II histocompatibility antigen, DQ haplotype D alpha chain (255 aa).

A signal peptide spans 1 to 23; it reads MVPGRVLMWGALALTAVMSACGG. Positions 24-120 are alpha-1; sequence EDIAADHVAS…QVPEVTVFPK (97 aa). At 24 to 217 the chain is on the extracellular side; that stretch reads EDIAADHVAS…IPAPMSELTE (194 aa). N-linked (GlcNAc...) asparagine glycans are attached at residues asparagine 104 and asparagine 144. Residues 113-205 enclose the Ig-like C1-type domain; sequence PEVTVFPKSP…LDKPLLKHWE (93 aa). Positions 121 to 204 are alpha-2; that stretch reads SPVMLGQPNT…GLDKPLLKHW (84 aa). A disulfide bond links cysteine 133 and cysteine 189. Residues 205–217 form a connecting peptide region; that stretch reads EPEIPAPMSELTE. The chain crosses the membrane as a helical span at residues 218–240; that stretch reads TVVCALGLIVGLVGIVVGTVFII. The Cytoplasmic portion of the chain corresponds to 241-255; the sequence is QGLRSGGPSRHQGSL.

This sequence belongs to the MHC class II family.

Its subcellular location is the membrane. The polypeptide is SLA class II histocompatibility antigen, DQ haplotype D alpha chain (Sus scrofa (Pig)).